Consider the following 176-residue polypeptide: Endoribonuclease YbeY (176 aa).

His-128, His-132, and His-138 together coordinate Zn(2+).

Belongs to the endoribonuclease YbeY family. The cofactor is Zn(2+).

Its subcellular location is the cytoplasm. Single strand-specific metallo-endoribonuclease involved in late-stage 70S ribosome quality control and in maturation of the 3' terminus of the 16S rRNA. The polypeptide is Endoribonuclease YbeY (Zymomonas mobilis subsp. mobilis (strain ATCC 31821 / ZM4 / CP4)).